A 1442-amino-acid polypeptide reads, in one-letter code: DNA-binding protein RFX7 (1442 aa).

The segment at 1–36 is disordered; sequence MEEEQQQQQQQQQAQKMQGTEQSAQLPPSAPGALPA. Positions 112–187 form a DNA-binding region, RFX-type winged-helix; sequence AFSWIRNTLE…YCYSGLRKKA (76 aa). The PxLPxI/L motif signature appears at 192-197; the sequence is PSLPNL. 3 disordered regions span residues 406–426, 485–514, and 929–1001; these read MQSV…GDRS, SAGT…KNGS, and SVTP…SVPP. Over residues 935 to 947 the composition is skewed to pro residues; sequence TPTPTPTPTPTLT. The segment covering 957 to 995 has biased composition (polar residues); that stretch reads GTQSLSRESPCSRLAQTTPVDSALGSSRHTPVGTPHSNC.

The protein belongs to the RFX family.

It localises to the nucleus. Functionally, transcription factor. Acts as a transcriptional activator by binding to promoter regions of target genes. Plays a role in natural killer (NK) cell maintenance and immunity. Plays a role in the process of ciliogenesis in the neural tube and neural tube closure by regulating the expression of RFX4. This is DNA-binding protein RFX7 from Xenopus laevis (African clawed frog).